Consider the following 226-residue polypeptide: Putative N-acetylmannosamine-6-phosphate 2-epimerase 1 (226 aa).

This sequence belongs to the NanE family.

It carries out the reaction an N-acyl-D-glucosamine 6-phosphate = an N-acyl-D-mannosamine 6-phosphate. Its pathway is amino-sugar metabolism; N-acetylneuraminate degradation; D-fructose 6-phosphate from N-acetylneuraminate: step 3/5. Functionally, converts N-acetylmannosamine-6-phosphate (ManNAc-6-P) to N-acetylglucosamine-6-phosphate (GlcNAc-6-P). The polypeptide is Putative N-acetylmannosamine-6-phosphate 2-epimerase 1 (Salmonella paratyphi A (strain ATCC 9150 / SARB42)).